A 263-amino-acid polypeptide reads, in one-letter code: Tryptophan synthase alpha chain (263 aa).

Active-site proton acceptor residues include glutamate 47 and aspartate 58.

The protein belongs to the TrpA family. Tetramer of two alpha and two beta chains.

It is found in the plastid. The protein resides in the chloroplast. It catalyses the reaction (1S,2R)-1-C-(indol-3-yl)glycerol 3-phosphate + L-serine = D-glyceraldehyde 3-phosphate + L-tryptophan + H2O. It participates in amino-acid biosynthesis; L-tryptophan biosynthesis; L-tryptophan from chorismate: step 5/5. In terms of biological role, the alpha subunit is responsible for the aldol cleavage of indoleglycerol phosphate to indole and glyceraldehyde 3-phosphate. The polypeptide is Tryptophan synthase alpha chain (Antithamnion sp. (Red alga)).